The following is a 402-amino-acid chain: 2,3-bisphosphoglycerate-independent phosphoglycerate mutase 2 (402 aa).

This sequence belongs to the BPG-independent phosphoglycerate mutase family. A-PGAM subfamily.

It carries out the reaction (2R)-2-phosphoglycerate = (2R)-3-phosphoglycerate. Its pathway is carbohydrate degradation; glycolysis; pyruvate from D-glyceraldehyde 3-phosphate: step 3/5. Functionally, catalyzes the interconversion of 2-phosphoglycerate and 3-phosphoglycerate. This is 2,3-bisphosphoglycerate-independent phosphoglycerate mutase 2 (apgM2) from Methanothermobacter thermautotrophicus (strain ATCC 29096 / DSM 1053 / JCM 10044 / NBRC 100330 / Delta H) (Methanobacterium thermoautotrophicum).